Reading from the N-terminus, the 550-residue chain is Zorya protein ZorA (550 aa).

3 consecutive transmembrane segments (helical) span residues Thr-16 to Cys-36, Leu-52 to Phe-72, and Phe-92 to Phe-112.

Belongs to the MotA family.

It is found in the cell inner membrane. Component of antiviral defense system Zorya type II, composed of ZorA, ZorB and ZorE. Expression of Zorya type II in E.coli (strain MG1655) confers resistance to phages SECphi7 and T7. While most T7 infected Zorya-containing cells undergo abortive infection, a minority produce viable phage progeny. These eventually accumulate to a high multiplicity of infection, leading to culture collapse by 170 minutes after initial infection. ZorA and ZorB probably assemble in the cell inner membrane and exert their effect there. In Escherichia coli (strain ATCC 8739 / DSM 1576 / NBRC 3972 / NCIMB 8545 / WDCM 00012 / Crooks), this protein is Zorya protein ZorA.